A 247-amino-acid polypeptide reads, in one-letter code: Probable phosphatase swp_1620 (247 aa).

Zn(2+) is bound by residues H8, H10, H16, H41, E74, H102, H132, D193, and H195.

This sequence belongs to the PHP family. It depends on Zn(2+) as a cofactor.

This is Probable phosphatase swp_1620 from Shewanella piezotolerans (strain WP3 / JCM 13877).